The following is a 399-amino-acid chain: Elongation factor Tu (399 aa).

The 200-residue stretch at 10–209 (KPHVNIGTIG…AVDDYIPTPV (200 aa)) folds into the tr-type G domain. The G1 stretch occupies residues 19–26 (GHVDHGKT). 19-26 (GHVDHGKT) lines the GTP pocket. Thr-26 is a binding site for Mg(2+). The tract at residues 62–66 (GITIN) is G2. The segment at 83–86 (DCPG) is G3. GTP is bound by residues 83–87 (DCPGH) and 138–141 (NKCD). The G4 stretch occupies residues 138–141 (NKCD). The G5 stretch occupies residues 175 to 177 (SAY).

The protein belongs to the TRAFAC class translation factor GTPase superfamily. Classic translation factor GTPase family. EF-Tu/EF-1A subfamily. Monomer.

It localises to the cytoplasm. It carries out the reaction GTP + H2O = GDP + phosphate + H(+). Functionally, GTP hydrolase that promotes the GTP-dependent binding of aminoacyl-tRNA to the A-site of ribosomes during protein biosynthesis. This is Elongation factor Tu from Bifidobacterium longum subsp. infantis (strain ATCC 15697 / DSM 20088 / JCM 1222 / NCTC 11817 / S12).